The primary structure comprises 262 residues: 3-methyl-2-oxobutanoate hydroxymethyltransferase (262 aa).

Mg(2+) contacts are provided by Asp44 and Asp83. Residues 44–45 (DS), Asp83, and Lys112 each bind 3-methyl-2-oxobutanoate. Glu114 contributes to the Mg(2+) binding site. Glu180 acts as the Proton acceptor in catalysis.

This sequence belongs to the PanB family. In terms of assembly, homodecamer; pentamer of dimers. It depends on Mg(2+) as a cofactor.

It is found in the cytoplasm. It carries out the reaction 3-methyl-2-oxobutanoate + (6R)-5,10-methylene-5,6,7,8-tetrahydrofolate + H2O = 2-dehydropantoate + (6S)-5,6,7,8-tetrahydrofolate. The protein operates within cofactor biosynthesis; (R)-pantothenate biosynthesis; (R)-pantoate from 3-methyl-2-oxobutanoate: step 1/2. Catalyzes the reversible reaction in which hydroxymethyl group from 5,10-methylenetetrahydrofolate is transferred onto alpha-ketoisovalerate to form ketopantoate. The chain is 3-methyl-2-oxobutanoate hydroxymethyltransferase from Chromobacterium violaceum (strain ATCC 12472 / DSM 30191 / JCM 1249 / CCUG 213 / NBRC 12614 / NCIMB 9131 / NCTC 9757 / MK).